The chain runs to 479 residues: Aspartyl/glutamyl-tRNA(Asn/Gln) amidotransferase subunit B (479 aa).

It belongs to the GatB/GatE family. GatB subfamily. As to quaternary structure, heterotrimer of A, B and C subunits.

The enzyme catalyses L-glutamyl-tRNA(Gln) + L-glutamine + ATP + H2O = L-glutaminyl-tRNA(Gln) + L-glutamate + ADP + phosphate + H(+). It carries out the reaction L-aspartyl-tRNA(Asn) + L-glutamine + ATP + H2O = L-asparaginyl-tRNA(Asn) + L-glutamate + ADP + phosphate + 2 H(+). Functionally, allows the formation of correctly charged Asn-tRNA(Asn) or Gln-tRNA(Gln) through the transamidation of misacylated Asp-tRNA(Asn) or Glu-tRNA(Gln) in organisms which lack either or both of asparaginyl-tRNA or glutaminyl-tRNA synthetases. The reaction takes place in the presence of glutamine and ATP through an activated phospho-Asp-tRNA(Asn) or phospho-Glu-tRNA(Gln). The polypeptide is Aspartyl/glutamyl-tRNA(Asn/Gln) amidotransferase subunit B (Streptococcus pyogenes serotype M28 (strain MGAS6180)).